Consider the following 154-residue polypeptide: Xanthine-guanine phosphoribosyltransferase (154 aa).

5-phospho-alpha-D-ribose 1-diphosphate is bound by residues 37–38 (RG), R69, and 88–96 (DDLVDSGDT). R69 is a GMP binding site. Residue D89 participates in Mg(2+) binding. 2 residues coordinate guanine: D92 and I135. Positions 92 and 135 each coordinate xanthine. GMP contacts are provided by residues 92 to 96 (DSGDT) and 134 to 135 (WI).

The protein belongs to the purine/pyrimidine phosphoribosyltransferase family. XGPT subfamily. As to quaternary structure, homotetramer. Mg(2+) is required as a cofactor.

It localises to the cell inner membrane. It catalyses the reaction GMP + diphosphate = guanine + 5-phospho-alpha-D-ribose 1-diphosphate. It carries out the reaction XMP + diphosphate = xanthine + 5-phospho-alpha-D-ribose 1-diphosphate. The enzyme catalyses IMP + diphosphate = hypoxanthine + 5-phospho-alpha-D-ribose 1-diphosphate. The protein operates within purine metabolism; GMP biosynthesis via salvage pathway; GMP from guanine: step 1/1. Its pathway is purine metabolism; XMP biosynthesis via salvage pathway; XMP from xanthine: step 1/1. In terms of biological role, purine salvage pathway enzyme that catalyzes the transfer of the ribosyl-5-phosphate group from 5-phospho-alpha-D-ribose 1-diphosphate (PRPP) to the N9 position of the 6-oxopurines guanine and xanthine to form the corresponding ribonucleotides GMP (guanosine 5'-monophosphate) and XMP (xanthosine 5'-monophosphate), with the release of PPi. To a lesser extent, also acts on hypoxanthine. This chain is Xanthine-guanine phosphoribosyltransferase, found in Vibrio cholerae serotype O1 (strain ATCC 39541 / Classical Ogawa 395 / O395).